The primary structure comprises 380 residues: DNA primase small subunit PriS (380 aa).

Residues aspartate 101, aspartate 103, and aspartate 282 contribute to the active site.

This sequence belongs to the eukaryotic-type primase small subunit family. In terms of assembly, heterodimer of a small subunit (PriS) and a large subunit (PriL). Mg(2+) is required as a cofactor. It depends on Mn(2+) as a cofactor.

Catalytic subunit of DNA primase, an RNA polymerase that catalyzes the synthesis of short RNA molecules used as primers for DNA polymerase during DNA replication. The small subunit contains the primase catalytic core and has DNA synthesis activity on its own. Binding to the large subunit stabilizes and modulates the activity, increasing the rate of DNA synthesis while decreasing the length of the DNA fragments, and conferring RNA synthesis capability. The DNA polymerase activity may enable DNA primase to also catalyze primer extension after primer synthesis. May also play a role in DNA repair. The protein is DNA primase small subunit PriS of Hyperthermus butylicus (strain DSM 5456 / JCM 9403 / PLM1-5).